A 370-amino-acid chain; its full sequence is MAKRDYYEVLGVSKTASDDEIKKAYRKLAMKYHPDRNPDNAEAEEKFKEASEAYEILSDSEKRSMYDRMGHNAFEGGFGGAGGGFGGFSAEDIFSQFGDIFGGAFGGGGRQQRQRRGSDLRYVMELTLEEAVKGVKKTITFTAPAPCDVCDGKGSKNPKDVETCKTCHGSGQVRMQQGFFSVQQTCGTCRGQGKIIKNPCHACHGSGVADRQQTLEVTIPAGVDNGDRVRLSGKGEAIRDGQAGDLYVEVVVREHEIFQRDGADLYMDVPVSIADAALGKEIEIPTLEGRVSLKIPEGTQTGKLFRLRGKGVRPVRSSMVGDLLCRIVVETPVNLTSRQRELLKELQASFDGEDSASSPKKKSFFDRLFD.

Positions 5–70 (DYYEVLGVSK…EKRSMYDRMG (66 aa)) constitute a J domain. The CR-type zinc finger occupies 134–212 (GVKKTITFTA…CHGSGVADRQ (79 aa)). Zn(2+) contacts are provided by Cys-147, Cys-150, Cys-164, Cys-167, Cys-186, Cys-189, Cys-200, and Cys-203. CXXCXGXG motif repeat units lie at residues 147–154 (CDVCDGKG), 164–171 (CKTCHGSG), 186–193 (CGTCRGQG), and 200–207 (CHACHGSG). Residues 351–370 (DGEDSASSPKKKSFFDRLFD) are disordered.

It belongs to the DnaJ family. In terms of assembly, homodimer. Zn(2+) serves as cofactor.

It is found in the cytoplasm. Its function is as follows. Participates actively in the response to hyperosmotic and heat shock by preventing the aggregation of stress-denatured proteins and by disaggregating proteins, also in an autonomous, DnaK-independent fashion. Unfolded proteins bind initially to DnaJ; upon interaction with the DnaJ-bound protein, DnaK hydrolyzes its bound ATP, resulting in the formation of a stable complex. GrpE releases ADP from DnaK; ATP binding to DnaK triggers the release of the substrate protein, thus completing the reaction cycle. Several rounds of ATP-dependent interactions between DnaJ, DnaK and GrpE are required for fully efficient folding. Also involved, together with DnaK and GrpE, in the DNA replication of plasmids through activation of initiation proteins. The chain is Chaperone protein DnaJ from Acinetobacter baumannii (strain AB0057).